Consider the following 660-residue polypeptide: Tripartite terminase subunit 3 (660 aa).

A Walker A motif motif is present at residues 203-210 (VPRRHGKT). The Walker B motif motif lies at 294 to 299 (ILLVDE). Glutamate 299 serves as the catalytic For ATPase activity. Catalysis depends on for nuclease activity residues aspartate 452, glutamate 523, and aspartate 637.

The protein belongs to the herpesviridae TRM3 protein family. As to quaternary structure, interacts with the terminase subunits TRM1 and TRM2. Interacts with portal protein.

It is found in the host nucleus. In terms of biological role, component of the molecular motor that translocates viral genomic DNA in empty capsid during DNA packaging. Forms a tripartite terminase complex together with TRM1 and TRM2 in the host cytoplasm. Once the complex reaches the host nucleus, it interacts with the capsid portal vertex. This portal forms a ring in which genomic DNA is translocated into the capsid. TRM3 carries an RNase H-like nuclease activity that plays an important role for the cleavage of concatemeric viral DNA into unit length genomes. This Elephas maximus (Indian elephant) protein is Tripartite terminase subunit 3.